We begin with the raw amino-acid sequence, 719 residues long: 1,4-alpha-glucan branching enzyme GlgB (719 aa).

Catalysis depends on Asp-400, which acts as the Nucleophile. Glu-453 (proton donor) is an active-site residue.

It belongs to the glycosyl hydrolase 13 family. GlgB subfamily. Monomer.

It catalyses the reaction Transfers a segment of a (1-&gt;4)-alpha-D-glucan chain to a primary hydroxy group in a similar glucan chain.. It participates in glycan biosynthesis; glycogen biosynthesis. In terms of biological role, catalyzes the formation of the alpha-1,6-glucosidic linkages in glycogen by scission of a 1,4-alpha-linked oligosaccharide from growing alpha-1,4-glucan chains and the subsequent attachment of the oligosaccharide to the alpha-1,6 position. The chain is 1,4-alpha-glucan branching enzyme GlgB from Chlamydia caviae (strain ATCC VR-813 / DSM 19441 / 03DC25 / GPIC) (Chlamydophila caviae).